A 293-amino-acid chain; its full sequence is Protease HtpX homolog (293 aa).

Helical transmembrane passes span Ile-5 to Leu-25 and Ala-43 to Ser-63. Position 148 (His-148) interacts with Zn(2+). Glu-149 is a catalytic residue. Zn(2+) is bound at residue His-152. Helical transmembrane passes span Val-159–Ile-179 and Phe-199–Trp-219. Residue Glu-225 coordinates Zn(2+).

It belongs to the peptidase M48B family. Zn(2+) is required as a cofactor.

Its subcellular location is the cell inner membrane. The polypeptide is Protease HtpX homolog (Nitrosomonas europaea (strain ATCC 19718 / CIP 103999 / KCTC 2705 / NBRC 14298)).